Reading from the N-terminus, the 312-residue chain is Ribosomal protein uL3 glutamine methyltransferase (312 aa).

This sequence belongs to the protein N5-glutamine methyltransferase family. PrmB subfamily.

It carries out the reaction L-glutaminyl-[ribosomal protein uL3] + S-adenosyl-L-methionine = N(5)-methyl-L-glutaminyl-[ribosomal protein uL3] + S-adenosyl-L-homocysteine + H(+). Methylates large ribosomal subunit protein uL3 on a specific glutamine residue. The polypeptide is Ribosomal protein uL3 glutamine methyltransferase (Xylella fastidiosa (strain 9a5c)).